A 363-amino-acid polypeptide reads, in one-letter code: Holliday junction branch migration complex subunit RuvB (363 aa).

Positions 1 to 32 (MSDVERTEFEIPGGIPPRRNGGQGRAADTNVD) are disordered. Residues 27 to 207 (ADTNVDANLK…FGFTAQMEFY (181 aa)) are large ATPase domain (RuvB-L). Residues Leu-46, Arg-47, Gly-88, Lys-91, Thr-92, Thr-93, 154–156 (EDF), Arg-197, Tyr-207, and Arg-244 contribute to the ATP site. A Mg(2+)-binding site is contributed by Thr-92. Positions 208-278 (DVPDLTKVVK…AANAALIVFD (71 aa)) are small ATPAse domain (RuvB-S). The tract at residues 281–363 (EVGLDRLDRA…EPPEGTIGDY (83 aa)) is head domain (RuvB-H). The DNA site is built by Arg-336 and Arg-341.

The protein belongs to the RuvB family. In terms of assembly, homohexamer. Forms an RuvA(8)-RuvB(12)-Holliday junction (HJ) complex. HJ DNA is sandwiched between 2 RuvA tetramers; dsDNA enters through RuvA and exits via RuvB. An RuvB hexamer assembles on each DNA strand where it exits the tetramer. Each RuvB hexamer is contacted by two RuvA subunits (via domain III) on 2 adjacent RuvB subunits; this complex drives branch migration. In the full resolvosome a probable DNA-RuvA(4)-RuvB(12)-RuvC(2) complex forms which resolves the HJ.

It localises to the cytoplasm. It carries out the reaction ATP + H2O = ADP + phosphate + H(+). Its function is as follows. The RuvA-RuvB-RuvC complex processes Holliday junction (HJ) DNA during genetic recombination and DNA repair, while the RuvA-RuvB complex plays an important role in the rescue of blocked DNA replication forks via replication fork reversal (RFR). RuvA specifically binds to HJ cruciform DNA, conferring on it an open structure. The RuvB hexamer acts as an ATP-dependent pump, pulling dsDNA into and through the RuvAB complex. RuvB forms 2 homohexamers on either side of HJ DNA bound by 1 or 2 RuvA tetramers; 4 subunits per hexamer contact DNA at a time. Coordinated motions by a converter formed by DNA-disengaged RuvB subunits stimulates ATP hydrolysis and nucleotide exchange. Immobilization of the converter enables RuvB to convert the ATP-contained energy into a lever motion, pulling 2 nucleotides of DNA out of the RuvA tetramer per ATP hydrolyzed, thus driving DNA branch migration. The RuvB motors rotate together with the DNA substrate, which together with the progressing nucleotide cycle form the mechanistic basis for DNA recombination by continuous HJ branch migration. Branch migration allows RuvC to scan DNA until it finds its consensus sequence, where it cleaves and resolves cruciform DNA. This Corynebacterium glutamicum (strain R) protein is Holliday junction branch migration complex subunit RuvB.